We begin with the raw amino-acid sequence, 512 residues long: UDP-N-acetylmuramoyl-L-alanyl-D-glutamate--2,6-diaminopimelate ligase (512 aa).

Ser32 contributes to the UDP-N-acetyl-alpha-D-muramoyl-L-alanyl-D-glutamate binding site. 114–120 (GTNGKTT) serves as a coordination point for ATP. UDP-N-acetyl-alpha-D-muramoyl-L-alanyl-D-glutamate is bound by residues 156–157 (TT), Ser183, and Arg191. Lys223 bears the N6-carboxylysine mark. Meso-2,6-diaminopimelate contacts are provided by residues Arg395, 419–422 (DNPR), Gly469, and Glu473. Positions 419–422 (DNPR) match the Meso-diaminopimelate recognition motif motif.

It belongs to the MurCDEF family. MurE subfamily. Requires Mg(2+) as cofactor. Carboxylation is probably crucial for Mg(2+) binding and, consequently, for the gamma-phosphate positioning of ATP.

The protein localises to the cytoplasm. The enzyme catalyses UDP-N-acetyl-alpha-D-muramoyl-L-alanyl-D-glutamate + meso-2,6-diaminopimelate + ATP = UDP-N-acetyl-alpha-D-muramoyl-L-alanyl-gamma-D-glutamyl-meso-2,6-diaminopimelate + ADP + phosphate + H(+). It participates in cell wall biogenesis; peptidoglycan biosynthesis. Its function is as follows. Catalyzes the addition of meso-diaminopimelic acid to the nucleotide precursor UDP-N-acetylmuramoyl-L-alanyl-D-glutamate (UMAG) in the biosynthesis of bacterial cell-wall peptidoglycan. The protein is UDP-N-acetylmuramoyl-L-alanyl-D-glutamate--2,6-diaminopimelate ligase of Chlorobium phaeobacteroides (strain DSM 266 / SMG 266 / 2430).